A 452-amino-acid polypeptide reads, in one-letter code: Transcription factor PERIANTHIA (452 aa).

The 64-residue stretch at 164–227 folds into the bZIP domain; the sequence is DQRTLRRLAQ…RGVSADHTHL (64 aa). The tract at residues 166-186 is basic motif; it reads RTLRRLAQNREAARKSRLRKK. The segment at 192–206 is leucine-zipper; the sequence is LENSRIRLAQLEEEL. One can recognise a DOG1 domain in the interval 233–449; the sequence is VFSFELEYTR…RALSSLWLAR (217 aa).

It belongs to the bZIP family. In terms of assembly, interacts with GRXC7/ROXY1. Interacts with BOP1 and BOP2.

It is found in the nucleus. Its function is as follows. Transcriptional activator involved in the determination of floral organ number. Acts to determine floral organ patterning by establishing floral organ primordia in specific numbers and positions. Plays a role in regulating stem cell fate by directly controlling AG expression. Binds to the 5'-AAGAAT-3' cis-acting element found in AG promoter. Might represent a target for a post-translational modification by GRXC7/ROXY1. The chain is Transcription factor PERIANTHIA (PAN) from Arabidopsis thaliana (Mouse-ear cress).